The chain runs to 633 residues: Chaperone protein DnaK (633 aa).

At Thr198 the chain carries Phosphothreonine; by autocatalysis.

The protein belongs to the heat shock protein 70 family.

Its function is as follows. Acts as a chaperone. This Rhodopseudomonas palustris (strain BisA53) protein is Chaperone protein DnaK.